Here is a 692-residue protein sequence, read N- to C-terminus: UvrABC system protein B (692 aa).

Residues 32–187 (ENIENGEKAQ…LLNDLVGIQF (156 aa)) enclose the Helicase ATP-binding domain. 45 to 52 (GATGTGKT) serves as a coordination point for ATP. Residues 98–121 (YYDYYQPEAYVPSSDTYIEKDSSV) carry the Beta-hairpin motif. The region spanning 436-631 (QIDDLVGEIH…TIKKEIRDLI (196 aa)) is the Helicase C-terminal domain. A UVR domain is found at 656 to 691 (KALVKKLEKEMQQAAAALDFEGAAQLRDMVLELRAM).

It belongs to the UvrB family. Forms a heterotetramer with UvrA during the search for lesions. Interacts with UvrC in an incision complex.

It is found in the cytoplasm. The UvrABC repair system catalyzes the recognition and processing of DNA lesions. A damage recognition complex composed of 2 UvrA and 2 UvrB subunits scans DNA for abnormalities. Upon binding of the UvrA(2)B(2) complex to a putative damaged site, the DNA wraps around one UvrB monomer. DNA wrap is dependent on ATP binding by UvrB and probably causes local melting of the DNA helix, facilitating insertion of UvrB beta-hairpin between the DNA strands. Then UvrB probes one DNA strand for the presence of a lesion. If a lesion is found the UvrA subunits dissociate and the UvrB-DNA preincision complex is formed. This complex is subsequently bound by UvrC and the second UvrB is released. If no lesion is found, the DNA wraps around the other UvrB subunit that will check the other stand for damage. The sequence is that of UvrABC system protein B from Lactococcus lactis subsp. cremoris (strain MG1363).